The sequence spans 577 residues: DEAD-box ATP-dependent RNA helicase 22 (577 aa).

The Q motif signature appears at 82–110 (TSWESLGVSDRLASALHGAGLARPSLVQA). The 263-residue stretch at 113–375 (IPHVLTTNDV…GGVLKRMFPN (263 aa)) folds into the Helicase ATP-binding domain. 126–133 (AETGSGKT) serves as a coordination point for ATP. Residues 249–252 (DEAD) carry the DEAD box motif. The segment at 288-317 (SLGDTNEYREDSDSQSAELSADDEENEDGL) is disordered. The region spanning 407–568 (LLDAVKYGLK…SFRNKLKKQA (162 aa)) is the Helicase C-terminal domain.

This sequence belongs to the DEAD box helicase family.

The enzyme catalyses ATP + H2O = ADP + phosphate + H(+). This is DEAD-box ATP-dependent RNA helicase 22 from Oryza sativa subsp. japonica (Rice).